Here is a 348-residue protein sequence, read N- to C-terminus: NADH-quinone oxidoreductase subunit H 1 (348 aa).

8 helical membrane passes run 11–31 (IYYISMVAKVLVVFVFVLLTV), 83–103 (FAFLIAPIIALVPAFIGFAVI), 136–156 (VGVLYILALASIGVYGIVLAG), 172–192 (SAQMISYELAAGLAIISVFML), 208–228 (GAWYCFKQPLAFILFFICSLA), 268–288 (MVTVCAVTTTLFLGGWHGPAF), 289–309 (LPGWAWFIAKVYFLIFVCMWI), and 324–344 (LGWKVFLPLTLVNIIVTGIVV).

It belongs to the complex I subunit 1 family. In terms of assembly, NDH-1 is composed of 14 different subunits. Subunits NuoA, H, J, K, L, M, N constitute the membrane sector of the complex.

Its subcellular location is the cell inner membrane. It carries out the reaction a quinone + NADH + 5 H(+)(in) = a quinol + NAD(+) + 4 H(+)(out). NDH-1 shuttles electrons from NADH, via FMN and iron-sulfur (Fe-S) centers, to quinones in the respiratory chain. The immediate electron acceptor for the enzyme in this species is believed to be ubiquinone. Couples the redox reaction to proton translocation (for every two electrons transferred, four hydrogen ions are translocated across the cytoplasmic membrane), and thus conserves the redox energy in a proton gradient. This subunit may bind ubiquinone. The polypeptide is NADH-quinone oxidoreductase subunit H 1 (Geobacter sulfurreducens (strain ATCC 51573 / DSM 12127 / PCA)).